The following is a 181-amino-acid chain: ATP synthase subunit b, chloroplastic (181 aa).

Residues 31–50 form a helical membrane-spanning segment; it reads NVLNIAILLSGVVYLGRNFL.

It belongs to the ATPase B chain family. F-type ATPases have 2 components, F(1) - the catalytic core - and F(0) - the membrane proton channel. F(1) has five subunits: alpha(3), beta(3), gamma(1), delta(1), epsilon(1). F(0) has four main subunits: a(1), b(1), b'(1) and c(10-14). The alpha and beta chains form an alternating ring which encloses part of the gamma chain. F(1) is attached to F(0) by a central stalk formed by the gamma and epsilon chains, while a peripheral stalk is formed by the delta, b and b' chains.

The protein localises to the plastid. The protein resides in the chloroplast thylakoid membrane. Its function is as follows. F(1)F(0) ATP synthase produces ATP from ADP in the presence of a proton or sodium gradient. F-type ATPases consist of two structural domains, F(1) containing the extramembraneous catalytic core and F(0) containing the membrane proton channel, linked together by a central stalk and a peripheral stalk. During catalysis, ATP synthesis in the catalytic domain of F(1) is coupled via a rotary mechanism of the central stalk subunits to proton translocation. In terms of biological role, component of the F(0) channel, it forms part of the peripheral stalk, linking F(1) to F(0). The polypeptide is ATP synthase subunit b, chloroplastic (Rhodomonas salina (Cryptomonas salina)).